The following is a 171-amino-acid chain: Shikimate kinase (171 aa).

14–19 is a binding site for ATP; the sequence is GAGKST. Mg(2+) is bound at residue Ser-18. Substrate-binding residues include Asp-36, Arg-60, and Gly-82. Residue Arg-120 coordinates ATP. Residue Arg-139 coordinates substrate. Gln-156 contacts ATP.

Belongs to the shikimate kinase family. In terms of assembly, monomer. Requires Mg(2+) as cofactor.

Its subcellular location is the cytoplasm. The catalysed reaction is shikimate + ATP = 3-phosphoshikimate + ADP + H(+). It participates in metabolic intermediate biosynthesis; chorismate biosynthesis; chorismate from D-erythrose 4-phosphate and phosphoenolpyruvate: step 5/7. In terms of biological role, catalyzes the specific phosphorylation of the 3-hydroxyl group of shikimic acid using ATP as a cosubstrate. This Alteromonas mediterranea (strain DSM 17117 / CIP 110805 / LMG 28347 / Deep ecotype) protein is Shikimate kinase.